A 105-amino-acid polypeptide reads, in one-letter code: Large ribosomal subunit protein uL24 (105 aa).

Belongs to the universal ribosomal protein uL24 family. In terms of assembly, part of the 50S ribosomal subunit.

Functionally, one of two assembly initiator proteins, it binds directly to the 5'-end of the 23S rRNA, where it nucleates assembly of the 50S subunit. In terms of biological role, one of the proteins that surrounds the polypeptide exit tunnel on the outside of the subunit. The polypeptide is Large ribosomal subunit protein uL24 (Mycolicibacterium vanbaalenii (strain DSM 7251 / JCM 13017 / BCRC 16820 / KCTC 9966 / NRRL B-24157 / PYR-1) (Mycobacterium vanbaalenii)).